The sequence spans 366 residues: uncharacterized protein (366 aa).

6 helical membrane passes run 30-50 (FWTY…AVGI), 66-86 (IIIA…IIVI), 136-156 (IFIS…GYLA), 162-182 (IILF…LDLL), 198-218 (IGVV…IYDI), and 225-245 (YIPE…IIDV).

It localises to the cell membrane. This is an uncharacterized protein from Methanocaldococcus jannaschii (strain ATCC 43067 / DSM 2661 / JAL-1 / JCM 10045 / NBRC 100440) (Methanococcus jannaschii).